Reading from the N-terminus, the 287-residue chain is Shikimate dehydrogenase (NADP(+)) (287 aa).

Shikimate-binding positions include 20-22 (SRS) and T67. Catalysis depends on K71, which acts as the Proton acceptor. E84 is a binding site for NADP(+). The shikimate site is built by N93 and D108. Residues 132–136 (GAGGA), 156–161 (NRTAAR), and M226 contribute to the NADP(+) site. Y228 is a shikimate binding site. G250 contacts NADP(+).

The protein belongs to the shikimate dehydrogenase family. Homodimer.

It catalyses the reaction shikimate + NADP(+) = 3-dehydroshikimate + NADPH + H(+). It participates in metabolic intermediate biosynthesis; chorismate biosynthesis; chorismate from D-erythrose 4-phosphate and phosphoenolpyruvate: step 4/7. Involved in the biosynthesis of the chorismate, which leads to the biosynthesis of aromatic amino acids. Catalyzes the reversible NADPH linked reduction of 3-dehydroshikimate (DHSA) to yield shikimate (SA). In Bordetella pertussis (strain Tohama I / ATCC BAA-589 / NCTC 13251), this protein is Shikimate dehydrogenase (NADP(+)).